A 310-amino-acid chain; its full sequence is UPF0324 membrane protein GSU2818 (310 aa).

A run of 9 helical transmembrane segments spans residues 11-33 (FTIL…VMGI), 53-72 (MLLQ…GEVI), 79-97 (IWYS…YGLG), 107-129 (SALI…APVL), 136-158 (TAVA…PLVG), 193-215 (ALAI…VMAA), 227-244 (IPLF…RTLL), 254-273 (LAGV…GAGL), and 286-308 (LVQA…KLPW).

The protein belongs to the UPF0324 family.

The protein localises to the cell membrane. This is UPF0324 membrane protein GSU2818 from Geobacter sulfurreducens (strain ATCC 51573 / DSM 12127 / PCA).